Here is a 2493-residue protein sequence, read N- to C-terminus: MEKVHVDIEEDSPFLRALQRSFPQFEVEAKQVTDNDHANARAFSHLASKLIETEVDPSDTILDIGSAPARRMYSKHKYHCICPMRCAEDPDRLYKYATKLKKNCKEITDKELDKKMKELAAVMSDPDLETETMCLHDDESCRYEGQVAVYQDVYAVDGPTSLYHQANKGVRVAYWIGFDTTPFMFKNLAGAYPSYSTNWADETVLTARNIGLCSSDVMERSRRGMSILRKKYLKPSNNVLFSVGSTIYHEKRDLLRSWHLPSVFHLRGKQNYTCRCETIVSCDGYVVKRIAISPGLYGKPSGYAATMHREGFLCCKVTDTLNGERVSFPVCTYVPATLCDQMTGILATDVSADDAQKLLVGLNQRIVVNGRTQRNTNTMKNYLLPVVAQAFARWAKEYKEDQEDERPLGLRDRQLVMGCCWAFRRHKITSIYKRPDTQTIIKVNSDFHSFVLPRIGSNTLEIGLRTRIRKMLEEHKEPSPLITAEDIQEAKCAADEAKEVREAEELRAALPPLAADFEEPTLEADVDLMLQEAGAGSVETPRGLIKVTSYAGEDKIGSYAVLSPQAVLKSEKLSCIHPLAEQVIVITHSGRKGRYAVEPYHGKVVVPEGHAIPVQDFQALSESATIVYNEREFVNRYLHHIATHGGALNTDEEYYKTVKPSEHDGEYLYDIDRKQCVKKELVTGLGLTGELVDPPFHEFAYESLRTRPAAPYQVPTIGVYGVPGSGKSGIIKSAVTKKDLVVSAKKENCAEIIRDVKKMKGLDVNARTVDSVLLNGCKHPVETLYIDEAFACHAGTLRALIAIIRPKKAVLCGDPKQCGFFNMMCLKVHFNHEICTQVFHKSISRRCTKSVTSVVSTLFYDKRMRTTNPKETKIVIDTTGSTKPKQDDLILTCFRGWVKQLQIDYKGNEIMTAAASQGLTRKGVYAVRYKVNENPLYAPTSEHVNVLLTRTEDRIVWKTLAGDPWIKILTAKYPGNFTATIEEWQAEHDAIMRHILERPDPTDVFQNKANVCWAKALVPVLKTAGIDMTTEQWNTVDYFETDKAHSAEIVLNQLCVRFFGLDLDSGLFSAPTVPLSIRNNHWDNSPSPNMYGLNKEVVRQLSRRYPQLPRAVATGRVYDMNTGTLRNYDPRINLVPVNRRLPHALVLHHNEHPQSDFSSFVSKLKGRTVLVVGEKLSVPGKKVDWLSDQPEATFRARLDLGIPGDVPKYDIVFINVRTPYKYHHYQQCEDHAIKLSMLTKKACLHLNPGGTCVSIGYGYADRASESIIGAIARQFKFSRVCKPKSSHEETEVLFVFIGYDRKARTHNPYKLSSTLTNIYTGSRLHEAGCAPSYHVVRGDIATATEGVIINAANSKGQPGGGVCGALYKKFPESFDLQPIEVGKARLVKGAAKHIIHAVGPNFNKVSEVEGDKQLAEAYESIAKIVNDNNYKSVAIPLLSTGIFSGNKDRLTQSLNHLLTALDTTDADVAIYCRDKKWEMTLKEAVARREAVEEICISDDSSVTEPDAELVRVHPKSSLAGRKGYSTSDGKTFSYLEGTKFHQAAKDIAEINAMWPVATEANEQVCMYILGESMSSIRSKCPVEESEASTPPSTLPCLCIHAMTPERVQRLKASRPEQITVCSSFPLPKYRITGVQKIQCSQPILFSPKVPAYIHPRKYLVETPPVEETPESPAENQSTEGTPEQPALVNVDATRTRMPEPIIIEEEEEDSISLLSDGPTHQVLQVEADIHGSPSVSSSSWSIPHASDFDVDSLSILDTLDGASVTSGAVSAETNSYFARSMEFRARPVPAPRTVFRNPPHPAPRTRTPPLAHSRASSRTSLVSTPPGVNRVITREELEALTPSRAPSRSASRTSLVSNPPGVNRVITREEFEAFVAQQQXRFDAGAYIFSSDTGQGHLQQKSVRQTVLSEVVLERTELEISYAPRLDQEKEELLRKKLQLNPTPANRSRYQSRRVENMKAITARRILQGLGHYLKAEGKVECYRTLHPVPLYSSSVNRAFSSPKVAVEACNAMLKENFPTVASYCIIPEYDAYLDMVDGASCCLDTASFCPAKLRSFPKKHSYLEPTIRSAVPSAIQNTLQNVLAAATKRNCNVTQMRELPVLDSAAFNVECFKKYACNNEYWETFKENPIRLTEENVVNYITKLKGPKAAALFAKTHNLNMLQDIPMDRFVMDLKRDVKVTPGTKHTEERPKVQVIQAADPLATADLCGIHRELVRRLNAVLLPNIHTLFDMSAEDFDAIIAEHFQPGDCVLETDIASFDKSEDDAMALTALMILEDLGVDAELLTLIEAAFGEISSIHLPTKTKFKFGAMMKSGMFLTLFVNTVINIVIASRVLRERLTGSPCAAFIGDDNIVKGVKSDKLMADRCATWLNMEVKIIDAVVGEKAPYFCGGFILCDSVTGTACRVADPLKRLFKLGKPLAVDDEHDDDRRRALHEESTRWNRVGILPELCKAVESRYETVGTSIIVMAMTTLASSVKSFSYLRGAPITLYG.

Positions 28–259 constitute an Alphavirus-like MT domain; sequence EAKQVTDNDH…EKRDLLRSWH (232 aa). A nsP1 membrane-binding region spans residues 244–263; the sequence is GSTIYHEKRDLLRSWHLPSV. C419 carries the S-palmitoyl cysteine; by host lipid modification. A (+)RNA virus helicase ATP-binding domain is found at 690–841; the sequence is ELVDPPFHEF…HEICTQVFHK (152 aa). 721-728 provides a ligand contact to a ribonucleoside 5'-triphosphate; sequence GVPGSGKS. The 149-residue stretch at 842-990 folds into the (+)RNA virus helicase C-terminal domain; it reads SISRRCTKSV…IEEWQAEHDA (149 aa). Residues 1003–1322 form the Peptidase C9 domain; the sequence is DVFQNKANVC…STLTNIYTGS (320 aa). The interval 1004–1023 is nucleolus localization signal; it reads VFQNKANVCWAKALVPVLKT. C1012 functions as the For cysteine protease nsP2 activity in the catalytic mechanism. The short motif at 1056–1065 is the Nuclear export signal element; sequence VRFFGLDLDS. The active-site For cysteine protease nsP2 activity is H1081. Positions 1179–1183 match the Nuclear localization signal motif; the sequence is PGKKV. The 160-residue stretch at 1330–1489 folds into the Macro domain; sequence APSYHVVRGD…TLKEAVARRE (160 aa). ADP-D-ribose-binding residues include D1339, N1353, G1361, G1441, I1442, and F1443. 4 residues coordinate Zn(2+): C1596, C1598, C1621, and C1639. 2 disordered regions span residues 1664-1684 and 1790-1826; these read PVEETPESPAENQSTEGTPEQ and APRTVFRNPPHPAPRTRTPPLAHSRASSRTSLVSTPP. A compositionally biased stretch (polar residues) spans 1814 to 1823; the sequence is RASSRTSLVS. Repeat copies occupy residues 1818-1839 and 1852-1873. Residues 1818 to 1873 form a 2 X 21 AA approximate repeats, binding to host FXR family members region; that stretch reads RTSLVSTPPGVNRVITREELEALTPSRAPSRSASRTSLVSNPPGVNRVITREEFEA. One can recognise a RdRp catalytic domain in the interval 2250-2365; it reads DCVLETDIAS…KGVKSDKLMA (116 aa).

As to quaternary structure, interacts with non-structural protein 3. Interacts with RNA-directed RNA polymerase nsP4. Interacts with protease nsP2. interacts with itself. In terms of assembly, interacts with mRNA-capping enzyme nsP1. Interacts with host DDX1. Interacts with host DDX3. Interacts (via C-terminus) with host FXR1; this interaction inhibits the formation of host stress granules on viral mRNAs and the nsp3-FXR1 complexes bind viral RNAs and probably orchestrate the assembly of viral replication complexes. Interacts (via C-terminus) with host FXR2; this interaction inhibits the formation of host stress granules on viral mRNAs and the nsp3-FXR2 complexes bind viral RNAs and probably orchestrate the assembly of viral replication complexes. Interacts (via C-terminus) with host FMR1; this interaction inhibits the formation of host stress granules on viral mRNAs and the nsp3-FMR1 complexes bind viral RNAs and probably orchestrate the assembly of viral replication complexes. Interacts with mRNA-capping enzyme nsP1. Interacts with protease nsP2. interacts with itself. As to quaternary structure, interacts with RNA-directed RNA polymerase nsP4. Interacts with mRNA-capping enzyme nsP1. Interacts with KPNA1/karyopherin-alpha1; this interaction probably allows the active transport of protease nsP2 into the host nucleus. The cofactor is Mg(2+). It depends on Mn(2+) as a cofactor. Specific enzymatic cleavages in vivo yield mature proteins. The processing of the polyprotein is temporally regulated. In early stages (1.7 hpi), P1234 is first cleaved in trans through its nsP2 protease activity, releasing P123' and nsP4, which associate to form the early replication complex. At the same time, P1234 is also cut at the nsP1/nsP2 site early in infection but with lower efficiency. After replication of the viral minus-strand RNAs (4 hpi), the polyproteins are cut at the nsP1/nsP2 and nsP2/nsP3 sites very efficiently, preventing accumulation of P123' and P1234 and allowing the formation of the late replication complex. NsP3'/nsP4 site is not cleaved anymore and P34 is produced rather than nsP4. Post-translationally, specific enzymatic cleavages in vivo yield mature proteins. The processing of the polyprotein is temporally regulated. In early stages (1.7 hpi), P123 is cleaved at the nsP1/nsP2 site with low efficiency. After replication of the viral minus-strand RNAs (4 hpi), the polyproteins are cut at the nsP1/nsP2 and nsP2/nsP3 sites very efficiently, preventing accumulation of P123 and allowing the formation of the late replication complex. In terms of processing, specific enzymatic cleavages in vivo yield mature proteins. The processing of the polyprotein is temporally regulated. In early stages (1.7 hpi), P123' is cleaved at the nsP1/nsP2 site with low efficiency. After replication of the viral minus-strand RNAs (4 hpi), the polyproteins are cut at the nsP1/nsP2 and nsP2/nsP3 sites very efficiently, preventing accumulation of P123' and allowing the formation of the late replication complex. Palmitoylated by host palmitoyltransferases ZDHHC2 and ZDHHC19. Post-translationally, phosphorylated by host on serines and threonines. In terms of processing, ubiquitinated; targets the protein for rapid degradation via the ubiquitin system. Nsp4 is present in extremely low quantities due to low frequency of translation through the amber stop-codon and the degradation by the ubiquitin pathway.

It is found in the host cytoplasmic vesicle membrane. The protein localises to the host cell membrane. It localises to the host cell projection. Its subcellular location is the host filopodium. The protein resides in the host nucleus. It is found in the host cytoplasm. It catalyses the reaction GTP + S-adenosyl-L-methionine = N(7)-methyl-GTP + S-adenosyl-L-homocysteine. The catalysed reaction is N(7)-methyl-GTP + L-histidyl-[protein] = N(tele)-(N(7)-methylguanosine 5'-phospho)-L-histidyl-[protein] + diphosphate. The enzyme catalyses N(tele)-(N(7)-methylguanosine 5'-phospho)-L-histidyl-[protein] + a 5'-end diphospho-(purine-ribonucleoside) in mRNA + H(+) = a 5'-end (N(7)-methyl 5'-triphosphoguanosine)-(purine-ribonucleoside) in mRNA + L-histidyl-[protein]. It carries out the reaction a 5'-end triphospho-ribonucleoside in mRNA + H2O = a 5'-end diphospho-ribonucleoside in mRNA + phosphate + H(+). It catalyses the reaction a ribonucleoside 5'-triphosphate + H2O = a ribonucleoside 5'-diphosphate + phosphate + H(+). The catalysed reaction is ATP + H2O = ADP + phosphate + H(+). The enzyme catalyses RNA(n) + a ribonucleoside 5'-triphosphate = RNA(n+1) + diphosphate. It carries out the reaction 4-O-(ADP-D-ribosyl)-L-aspartyl-[protein] + H2O = L-aspartyl-[protein] + ADP-D-ribose + H(+). It catalyses the reaction 5-O-(ADP-D-ribosyl)-L-glutamyl-[protein] + H2O = L-glutamyl-[protein] + ADP-D-ribose + H(+). The catalysed reaction is RNA(n) + ATP = RNA(n)-3'-adenine ribonucleotide + diphosphate. The enzyme catalyses ADP-alpha-D-ribose 1''-phosphate + H2O = ADP-D-ribose + phosphate. Inhibited by sinefungin. Functionally, inactive precursor of the viral replicase, which is activated by cleavages carried out by the viral protease nsP2. In terms of biological role, the early replication complex formed by the polyprotein P123 and nsP4 synthesizes the minus-strand RNAs (antigenome). Polyprotein P123 is a short-lived polyprotein that accumulates during early stage of infection. As soon P123 is cleaved into mature proteins, the plus-strand RNAs synthesis begins. The early replication complex formed by the polyprotein P123' and nsP4 synthesizes minus-strand RNAs (antigenome). Polyprotein P123' is a short-lived polyprotein that accumulates during early stage of infection. As soon P123' is cleaved into mature proteins, the plus-strand RNAs synthesis begins. Its function is as follows. Cytoplasmic capping enzyme that catalyzes two virus-specific reactions: methyltransferase and nsP1 guanylyltransferase. mRNA-capping is necessary since all viral RNAs are synthesized in the cytoplasm, and host capping enzymes are restricted to the nucleus. The enzymatic reaction involves a covalent link between 7-methyl-GMP and nsP1, whereas eukaryotic capping enzymes form a covalent complex only with GMP. NsP1 capping consists in the following reactions: GTP is first methylated into 7-methyl-GMP and then is covalently linked to nsP1 to form the m7GMp-nsP1 complex from which 7-methyl-GMP complex is transferred to the mRNA to create the cap structure. NsP1 is also needed for the initiation of the minus-strand RNAs synthesis. Probably serves as a membrane anchor for the replication complex composed of nsP1-nsP4. Nsp1 is needed for the initiation of the minus-strand RNAs synthesis. Palmitoylated nsP1 is remodeling host cell cytoskeleton, and induces filopodium-like structure formation at the surface of the host cell. Functionally, multifunctional protein whose N-terminus is part of the RNA polymerase complex and displays NTPase, RNA triphosphatase and helicase activities. NTPase and RNA triphosphatase are involved in viral RNA capping and helicase keeps a check on the dsRNA replication intermediates. The C-terminus harbors a protease that specifically cleaves the polyproteins and releases the mature proteins. Required for the shutoff of minus-strand RNAs synthesis. Inhibits host translation to ensure maximal viral gene expression and evade host immune response. In terms of biological role, seems to be essential for minus-strand RNAs and subgenomic 26S mRNAs synthesis. Displays mono-ADP-ribosylhydrolase activity. ADP-ribosylation is a post-translational modification that controls various processes of the host cell and the virus probably needs to revert it for optimal viral replication. Binds proteins of FXR family and sequesters them into the viral RNA replication complexes thereby inhibiting the formation of host stress granules on viral mRNAs. The nsp3-FXR complexes bind viral RNAs and probably orchestrate the assembly of viral replication complexes, thanks to the ability of FXR family members to self-assemble and bind DNA. Seems to be essential for minus-strand RNAs and subgenomic 26S mRNAs synthesis. Displays mono-ADP-ribosylhydrolase activity. ADP-ribosylation is a post-translational modification that controls various processes of the host cell and the virus probably needs to revert it for optimal viral replication. Binds proteins of FXR family and sequesters them into the viral RNA replication complexes thereby inhibiting the formation of host stress granules on viral mRNAs. The nsp3'-FXR complexes bind viral RNAs and probably orchestrate the assembly of viral replication complexes, thanks to the ability of FXR family members to self-assemble and bind DNA. Its function is as follows. RNA dependent RNA polymerase. Replicates genomic and antigenomic RNA by recognizing replications specific signals. The early replication complex formed by the polyprotein P123 and nsP4 synthesizes minus-strand RNAs. The late replication complex composed of fully processed nsP1-nsP4 is responsible for the production of genomic and subgenomic plus-strand RNAs. In Bos taurus (Bovine), this protein is Polyprotein P1234.